We begin with the raw amino-acid sequence, 652 residues long: Capsid protein (652 aa).

The span at 1–11 shows a compositional bias: polar residues; sequence MSSNDSAQTRN. Residues 1–70 form a disordered region; that stretch reads MSSNDSAQTR…SSSDPPSASG (70 aa). Positions 34-47 are enriched in low complexity; it reads TNGPTTNSTSGSVG.

It is found in the virion. Its function is as follows. The capsid protein self-assembles to form an icosahedral capsid with a T=2 symmetry made of 120 subunits. The chain is Capsid protein from Atkinsonella hypoxylon virus (isolate 2H) (AhV).